We begin with the raw amino-acid sequence, 206 residues long: Small ribosomal subunit protein uS5 (206 aa).

Polar residues predominate over residues 1–15 (MTDTPTKQEIQSKND). Positions 1 to 50 (MTDTPTKQEIQSKNDNVPAATPVEQKKNNRNDRKRNRRGDSKNLERDSDW) are disordered. The span at 38–50 (RGDSKNLERDSDW) shows a compositional bias: basic and acidic residues. Residues 50–113 (WQERVVQIRR…SDGKKNLVRV (64 aa)) form the S5 DRBM domain.

It belongs to the universal ribosomal protein uS5 family. As to quaternary structure, part of the 30S ribosomal subunit. Contacts proteins S4 and S8.

In terms of biological role, with S4 and S12 plays an important role in translational accuracy. Functionally, located at the back of the 30S subunit body where it stabilizes the conformation of the head with respect to the body. The polypeptide is Small ribosomal subunit protein uS5 (Prochlorococcus marinus (strain AS9601)).